The chain runs to 1558 residues: Eukaryotic translation initiation factor 2-alpha kinase 1 (1558 aa).

In terms of domain architecture, Protein kinase spans 429–789 (FFEEKILGCG…AYNLLHESVL (361 aa)). ATP contacts are provided by residues 435–443 (LGCGGFGYV) and Lys-458. Asp-660 functions as the Proton acceptor in the catalytic mechanism. The disordered stretch occupies residues 1014–1033 (GTSTNNNNNNNNNNMGNNNI).

Belongs to the protein kinase superfamily. Ser/Thr protein kinase family. GCN2 subfamily. Auto-phosphorylated.

It catalyses the reaction L-seryl-[protein] + ATP = O-phospho-L-seryl-[protein] + ADP + H(+). It carries out the reaction L-threonyl-[protein] + ATP = O-phospho-L-threonyl-[protein] + ADP + H(+). Functionally, in blood stage parasites, phosphorylates translation factor eIF2alpha in response to amino acid starvation. During the asexual blood stage, involved in the response to the host hormone melatonin which is used by the parasite to modulate its cell cycle. The chain is Eukaryotic translation initiation factor 2-alpha kinase 1 from Plasmodium falciparum (isolate 3D7).